We begin with the raw amino-acid sequence, 356 residues long: Pavine N-methyltransferase (356 aa).

8 residues coordinate S-adenosyl-L-homocysteine: Phe-96, Ser-97, Gly-135, Asn-159, Gln-163, Asp-185, Val-186, and Val-201. Residues Phe-96, Ser-97, Gly-135, Asn-159, Gln-163, Asp-185, Val-186, and Val-201 each contribute to the S-adenosyl-L-methionine site. Glu-205 is a (S)-tetrahydropapaverine binding site. Cys-331 is a catalytic residue.

It belongs to the CFA/CMAS family. As to quaternary structure, homodimer.

It is found in the cytoplasm. It carries out the reaction (+-)-pavine + S-adenosyl-L-methionine = N-methylpavine + S-adenosyl-L-homocysteine + H(+). It catalyses the reaction (S)-reticuline + S-adenosyl-L-methionine = (S)-tembetarine + S-adenosyl-L-homocysteine + H(+). The catalysed reaction is (S)-stylopine + S-adenosyl-L-methionine = (S)-cis-N-methylstylopine + S-adenosyl-L-homocysteine. The enzyme catalyses (S)-scoulerine + S-adenosyl-L-methionine = (S)-cis-N-methylscoulerine + S-adenosyl-L-homocysteine. It carries out the reaction (S)-tetrahydropapaverine + S-adenosyl-L-methionine = (S)-N-methyltetrahydropapaverine + S-adenosyl-L-homocysteine + H(+). It catalyses the reaction (S)-tetrahydropalmatine + S-adenosyl-L-methionine = (S)-cis-N-methyltetrahydropalmatine + S-adenosyl-L-homocysteine. It functions in the pathway alkaloid biosynthesis. With respect to regulation, in the presence of a racemic mixture of tetrahydropapaverine (THP), one molecule of (S)-THP binds in a productive mode, while one molecule of (R)-THP is bound next to it in a non-productive mode. The (R)-THP seems to inhibit the release of products from the enzyme when higher concentrations of the racemic substrate are added to the reaction. Functionally, N-methyltransferase with a substrate preference for (+-)-pavine and (S)-reticuline, but also active with the protoberberines scoulerine and stylopine and, to a lesser extent, tetrahydropapaverine (THP) and tetrahydropalmatine. Is not active on (R)-reticuline, cryptopine, glaucine, codeine, canadaline, noscapine and berbamine. This Thalictrum flavum subsp. glaucum (Yellow meadow rue) protein is Pavine N-methyltransferase.